Here is a 134-residue protein sequence, read N- to C-terminus: MNTLRLNIVTPNGSVYEREDVEMAVLQTTAGEMGIMYGHIPTVAALKTGHVKVNFHNGNEFIAVSDGFIEARQHQLSIIVQTAEPASEIDVERAKLAKSRAESHLEEDDDNTDINRAKRALERANNRLRVAELQ.

Residues 94-104 (AKLAKSRAESH) show a composition bias toward basic and acidic residues. Positions 94 to 115 (AKLAKSRAESHLEEDDDNTDIN) are disordered.

The protein belongs to the ATPase epsilon chain family. As to quaternary structure, F-type ATPases have 2 components, CF(1) - the catalytic core - and CF(0) - the membrane proton channel. CF(1) has five subunits: alpha(3), beta(3), gamma(1), delta(1), epsilon(1). CF(0) has three main subunits: a, b and c.

Its subcellular location is the cell membrane. Produces ATP from ADP in the presence of a proton gradient across the membrane. This Staphylococcus epidermidis (strain ATCC 35984 / DSM 28319 / BCRC 17069 / CCUG 31568 / BM 3577 / RP62A) protein is ATP synthase epsilon chain.